Here is a 418-residue protein sequence, read N- to C-terminus: Histidine--tRNA ligase (418 aa).

It belongs to the class-II aminoacyl-tRNA synthetase family. In terms of assembly, homodimer.

Its subcellular location is the cytoplasm. The enzyme catalyses tRNA(His) + L-histidine + ATP = L-histidyl-tRNA(His) + AMP + diphosphate + H(+). This is Histidine--tRNA ligase from Thermosipho africanus (strain TCF52B).